Consider the following 329-residue polypeptide: Probable carboxylesterase 13 (329 aa).

M1 is subject to N-acetylmethionine. Positions 81–83 match the Involved in the stabilization of the negatively charged intermediate by the formation of the oxyanion hole motif; sequence HGG. Active-site residues include S165, D269, and H302.

It belongs to the 'GDXG' lipolytic enzyme family. As to expression, expressed in flowers.

It carries out the reaction a carboxylic ester + H2O = an alcohol + a carboxylate + H(+). Its function is as follows. Carboxylesterase acting on esters with varying acyl chain length. This Arabidopsis thaliana (Mouse-ear cress) protein is Probable carboxylesterase 13 (CXE13).